The sequence spans 467 residues: Uronate isomerase (467 aa).

Belongs to the metallo-dependent hydrolases superfamily. Uronate isomerase family.

It catalyses the reaction D-glucuronate = D-fructuronate. The enzyme catalyses aldehydo-D-galacturonate = keto-D-tagaturonate. The protein operates within carbohydrate metabolism; pentose and glucuronate interconversion. The chain is Uronate isomerase from Geobacillus thermodenitrificans (strain NG80-2).